A 432-amino-acid chain; its full sequence is Cytoplasmic 60S subunit biogenesis factor REH1 (432 aa).

Residues 6-30 form a C2H2-type 1 zinc finger; sequence FTCNCCVIQFKTSDLQRYHMKTEWH. Residues 79-150 are disordered; it reads QSNALPQKQK…NTDYGEDTVS (72 aa). Basic residues predominate over residues 86–98; sequence KQKKPIKSKRGRK. Basic and acidic residues predominate over residues 105–117; the sequence is KRKDRDIAKEKQN. Over residues 118 to 143 the composition is skewed to polar residues; that stretch reads RSVSPSGSISSQLSNLTVGTENTNTD. C2H2-type zinc fingers lie at residues 186–209 and 237–261; these read TECIYCGKDNKEVERNVKHMFSEH and HNCLCCNFHGSGLESIRAHMASKRH.

This sequence belongs to the REI1 family. Associates with nascent pre-60S particles that have not yet entered the translating pool, and is released from mature 60S subunits. Interacts with pre-60S factors NMD3, LSG1, and TIF6.

The protein resides in the cytoplasm. Functionally, pre-60S-associated cytoplasmic factor involved in the cytoplasmic maturation of the 60S subunit. May act redundantly with REI1 to directly promote a stabilizing structural rearrangement in cytoplasmic 60S subunit maturation independent on the REI1-specific ARX1 recycling. This chain is Cytoplasmic 60S subunit biogenesis factor REH1 (REH1), found in Saccharomyces cerevisiae (strain ATCC 204508 / S288c) (Baker's yeast).